The following is a 307-amino-acid chain: 4-hydroxy-tetrahydrodipicolinate synthase (307 aa).

Ser-57 contributes to the pyruvate binding site. Catalysis depends on Tyr-145, which acts as the Proton donor/acceptor. Lys-173 serves as the catalytic Schiff-base intermediate with substrate. Ile-219 lines the pyruvate pocket.

Belongs to the DapA family. Homotetramer; dimer of dimers.

It localises to the cytoplasm. It carries out the reaction L-aspartate 4-semialdehyde + pyruvate = (2S,4S)-4-hydroxy-2,3,4,5-tetrahydrodipicolinate + H2O + H(+). Its pathway is amino-acid biosynthesis; L-lysine biosynthesis via DAP pathway; (S)-tetrahydrodipicolinate from L-aspartate: step 3/4. Functionally, catalyzes the condensation of (S)-aspartate-beta-semialdehyde [(S)-ASA] and pyruvate to 4-hydroxy-tetrahydrodipicolinate (HTPA). The polypeptide is 4-hydroxy-tetrahydrodipicolinate synthase (Polynucleobacter asymbioticus (strain DSM 18221 / CIP 109841 / QLW-P1DMWA-1) (Polynucleobacter necessarius subsp. asymbioticus)).